An 855-amino-acid chain; its full sequence is Mitofusin FZO1 (855 aa).

Residues 1-19 show a composition bias toward basic and acidic residues; the sequence is MSEGKQQFKDSNKPHKDST. The tract at residues 1–27 is disordered; that stretch reads MSEGKQQFKDSNKPHKDSTDQDDDAAT. Over 1 to 705 the chain is Cytoplasmic; sequence MSEGKQQFKD…PSLLFTSKIP (705 aa). The tract at residues 91 to 190 is HRN; the sequence is NYNNNRVLLK…KRVDDVSSKV (100 aa). Residues 184 to 467 enclose the Dynamin-type G domain; sequence DDVSSKVFIT…KKRSLSKLLP (284 aa). Residues 197 to 202 and 370 to 373 each bind GTP; these read NTGKSA and KKFD. Lys-398 is covalently cross-linked (Glycyl lysine isopeptide (Lys-Gly) (interchain with G-Cter in ubiquitin)). Residue Ser-408 coordinates GTP. The span at 413–433 shows a compositional bias: basic and acidic residues; it reads ELPHYHNENDNEDHGDRKPDD. The disordered stretch occupies residues 413–447; that stretch reads ELPHYHNENDNEDHGDRKPDDDPYSSSDPDPDFDS. Residue Lys-464 forms a Glycyl lysine isopeptide (Lys-Gly) (interchain with G-Cter in ubiquitin) linkage. The segment at 484 to 547 is HR1; the sequence is KSNMKMYSEE…KEALLNALDV (64 aa). A required for interaction with UGO1 region spans residues 630–843; sequence GKRLKVSLSI…QSLYEGTVAQ (214 aa). The helical transmembrane segment at 706–726 threads the bilayer; the sequence is TLTLYFLGSTKVVGNIILNGI. The Mitochondrial intermembrane portion of the chain corresponds to 727 to 736; the sequence is KLSSWSSLKK. Residues 737–757 traverse the membrane as a helical segment; sequence LSVPVIVVGSLLGLTYLIHDL. Over 758–855 the chain is Cytoplasmic; it reads PRALPMNLSI…MVEEINLDID (98 aa). Residues 769–831 form an HR2 region; the sequence is YKRKLQELDY…KKESNLLSIK (63 aa). A coiled-coil region spans residues 798 to 825; it reads TREILRSCEIIMDKKQITKKELENKKES.

Belongs to the TRAFAC class dynamin-like GTPase superfamily. Dynamin/Fzo/YdjA family. Mitofusin subfamily. As to quaternary structure, homodimer. Dimerization depends on GTP binding. Component of a large multiprotein complex of 800 kDa. Binds the cytoplasmic domain of UGO1 which binds MGM1 through its intermembrane space domain. Interacts with MDM30. Interacts with UBP2 and UBP12. Interacts (when ubiquitinated) with DOA1; the interaction recruits FZO1 to CDC48 and promotes FZO1 proteasomal degradation. Ubiquitinated at Lys-398 and Lys-464. MDM30 and UGO1 are involved in ubiquitination. Deubiquitinated by UBP2 and UBP12. UBP2 and UBP12 recognize distinct ubiquitin chains on FZO1 that have opposing effects on mitochondrial fusion. UBP2 removes ubiquitin chains that initiate proteolysis of FZO1 and inhibit fusion. UBP12 recognizes ubiquitin chains that stabilize FZO1 and promote mitochondrial fusion. UBP12 deubiquitylates FZO1 only after oligomerization.

The protein localises to the mitochondrion outer membrane. It catalyses the reaction GTP + H2O = GDP + phosphate + H(+). Functionally, essential transmembrane GTPase, which mediates mitochondrial fusion. Fusion proceeds through several steps; first mitochondria are tethered together, then brought into close contact, followed by the formation of a docking ring around contact areas, and finally membrane fusion. Fusion of mitochondria occurs in many cell types and constitutes an important step in mitochondrial morphology, which is balanced between fusion and fission, mediated by FZO1 and DNM1, respectively. Functions antagonistically with DNM1. Probably acts by forming membrane contact sites that mediate mitochondrial membrane fusion. Mitochondrial docking and fusion requires GTP hydrolysis. Mitochondrial fusion also promotes increased lifespan. The sequence is that of Mitofusin FZO1 (FZO1) from Saccharomyces cerevisiae (strain ATCC 204508 / S288c) (Baker's yeast).